The chain runs to 311 residues: Cytochrome f (311 aa).

The signal sequence occupies residues 1 to 27 (MRRHLSLVLGSLVIGLALLIAPGASWA). Tyr28, Cys48, Cys51, and His52 together coordinate heme. A helical transmembrane segment spans residues 277–297 (IYGLLAFFAAVAIAQIMLVLK).

This sequence belongs to the cytochrome f family. The 4 large subunits of the cytochrome b6-f complex are cytochrome b6, subunit IV (17 kDa polypeptide, PetD), cytochrome f and the Rieske protein, while the 4 small subunits are PetG, PetL, PetM and PetN. The complex functions as a dimer. It depends on heme as a cofactor.

It is found in the cellular thylakoid membrane. In terms of biological role, component of the cytochrome b6-f complex, which mediates electron transfer between photosystem II (PSII) and photosystem I (PSI), cyclic electron flow around PSI, and state transitions. This is Cytochrome f from Synechococcus sp. (strain CC9902).